A 422-amino-acid polypeptide reads, in one-letter code: E3 ubiquitin-protein ligase IE2 (422 aa).

The span at 1–10 (MSRQINAVTP) shows a compositional bias: polar residues. Disordered regions lie at residues 1–86 (MSRQ…VQII) and 165–215 (SPRS…EGEE). The span at 14–26 (SRRHRLSLSRRRI) shows a compositional bias: basic residues. The segment covering 36–63 (PSSSSRSQPSSSSRSQPYSSSRSQPYSS) has biased composition (low complexity). The span at 71–80 (ERSQEQRVSE) shows a compositional bias: basic and acidic residues. The segment covering 179–196 (DVLSQSPDLFDSPQSPQQ) has biased composition (polar residues). The span at 200 to 215 (ELEDEDEEEEEEEGEE) shows a compositional bias: acidic residues. The RING-type; degenerate zinc finger occupies 220-268 (CNICFTTLKDTKNVDSSFVTSIDCNHAVCFKCYVRIIMDNSTYKCFCSA). Residues 314-414 (IDLNDVERLE…RRNSELVAEL (101 aa)) are a coiled coil.

This sequence belongs to the alphabaculovirus IE2 protein family. As to quaternary structure, homooligomer. In terms of processing, auto-ubiquitinated.

The protein localises to the host nucleus. The catalysed reaction is S-ubiquitinyl-[E2 ubiquitin-conjugating enzyme]-L-cysteine + [acceptor protein]-L-lysine = [E2 ubiquitin-conjugating enzyme]-L-cysteine + N(6)-ubiquitinyl-[acceptor protein]-L-lysine.. In terms of biological role, RING-finger E3 ubiquitin ligase that plays an important regulatory role during the initial stages of infection. Migrates to specific nuclear foci early in infection supposely to prepare the sites for viral replication by targeting and ubiquitinating host proteins. The protein is E3 ubiquitin-protein ligase IE2 (IE2) of Bombyx mori nuclear polyhedrosis virus (BmNPV).